The sequence spans 197 residues: Protein GrpE (197 aa).

Basic and acidic residues predominate over residues 1–27; that stretch reads MSNKEQHIEKEEQLQEEKHEEQQKTEE. Residues 1 to 34 are disordered; sequence MSNKEQHIEKEEQLQEEKHEEQQKTEETEVEAVN.

It belongs to the GrpE family. In terms of assembly, homodimer.

It localises to the cytoplasm. Functionally, participates actively in the response to hyperosmotic and heat shock by preventing the aggregation of stress-denatured proteins, in association with DnaK and GrpE. It is the nucleotide exchange factor for DnaK and may function as a thermosensor. Unfolded proteins bind initially to DnaJ; upon interaction with the DnaJ-bound protein, DnaK hydrolyzes its bound ATP, resulting in the formation of a stable complex. GrpE releases ADP from DnaK; ATP binding to DnaK triggers the release of the substrate protein, thus completing the reaction cycle. Several rounds of ATP-dependent interactions between DnaJ, DnaK and GrpE are required for fully efficient folding. This is Protein GrpE from Pasteurella multocida (strain Pm70).